The chain runs to 115 residues: Immunoglobulin kappa variable 5-2 (115 aa).

Residues 1–20 (MGSQVHLLSFLLLWISDTRA) form the signal peptide. Residues 21–43 (ETTLTQSPAFMSATPGDKVNISC) form a framework-1 region. The Ig-like domain occupies 22-115 (TTLTQSPAFM…YFCLQHDNFP (94 aa)). The N-linked (GlcNAc...) asparagine glycan is linked to asparagine 40. At serine 42 the chain carries Phosphoserine. A disulfide bond links cysteine 43 and cysteine 108. The tract at residues 44-54 (KASQDIDDDMN) is complementarity-determining-1. Residues 55–69 (WYQQKPGEAAIFIIQ) are framework-2. The interval 70–76 (EATTLVP) is complementarity-determining-2. The segment at 77-108 (GIPPRFSGSGYGTDFTLTINNIESEDAAYYFC) is framework-3. The segment at 109 to 115 (LQHDNFP) is complementarity-determining-3.

In terms of assembly, immunoglobulins are composed of two identical heavy chains and two identical light chains; disulfide-linked.

Its subcellular location is the secreted. It is found in the cell membrane. In terms of biological role, v region of the variable domain of immunoglobulin light chains that participates in the antigen recognition. Immunoglobulins, also known as antibodies, are membrane-bound or secreted glycoproteins produced by B lymphocytes. In the recognition phase of humoral immunity, the membrane-bound immunoglobulins serve as receptors which, upon binding of a specific antigen, trigger the clonal expansion and differentiation of B lymphocytes into immunoglobulins-secreting plasma cells. Secreted immunoglobulins mediate the effector phase of humoral immunity, which results in the elimination of bound antigens. The antigen binding site is formed by the variable domain of one heavy chain, together with that of its associated light chain. Thus, each immunoglobulin has two antigen binding sites with remarkable affinity for a particular antigen. The variable domains are assembled by a process called V-(D)-J rearrangement and can then be subjected to somatic hypermutations which, after exposure to antigen and selection, allow affinity maturation for a particular antigen. This is Immunoglobulin kappa variable 5-2 from Homo sapiens (Human).